A 193-amino-acid chain; its full sequence is Lipid A acyltransferase PagP (193 aa).

Positions M1–A32 are cleaved as a signal peptide. Catalysis depends on residues H65, D108, and S109.

It belongs to the lipid A palmitoyltransferase family. As to quaternary structure, homodimer.

It is found in the cell outer membrane. It carries out the reaction a lipid A + a 1,2-diacyl-sn-glycero-3-phosphocholine = a hepta-acyl lipid A + a 2-acyl-sn-glycero-3-phosphocholine. The enzyme catalyses a lipid IVA + a 1,2-diacyl-sn-glycero-3-phosphocholine = a lipid IVB + a 2-acyl-sn-glycero-3-phosphocholine. It catalyses the reaction a lipid IIA + a 1,2-diacyl-sn-glycero-3-phosphocholine = a lipid IIB + a 2-acyl-sn-glycero-3-phosphocholine. Functionally, transfers a fatty acid residue from the sn-1 position of a phospholipid to the N-linked hydroxyfatty acid chain on the proximal unit of lipid A or its precursors. The sequence is that of Lipid A acyltransferase PagP from Salmonella paratyphi C (strain RKS4594).